Reading from the N-terminus, the 364-residue chain is S-adenosylmethionine:tRNA ribosyltransferase-isomerase (364 aa).

A disordered region spans residues 344–364 (ASDKMQETSGRGERPRFDHEI).

The protein belongs to the QueA family. In terms of assembly, monomer.

It localises to the cytoplasm. It catalyses the reaction 7-aminomethyl-7-carbaguanosine(34) in tRNA + S-adenosyl-L-methionine = epoxyqueuosine(34) in tRNA + adenine + L-methionine + 2 H(+). Its pathway is tRNA modification; tRNA-queuosine biosynthesis. In terms of biological role, transfers and isomerizes the ribose moiety from AdoMet to the 7-aminomethyl group of 7-deazaguanine (preQ1-tRNA) to give epoxyqueuosine (oQ-tRNA). In Thioalkalivibrio sulfidiphilus (strain HL-EbGR7), this protein is S-adenosylmethionine:tRNA ribosyltransferase-isomerase.